Here is a 375-residue protein sequence, read N- to C-terminus: Aminomethyltransferase (375 aa).

The protein belongs to the GcvT family. As to quaternary structure, the glycine cleavage system is composed of four proteins: P, T, L and H.

The enzyme catalyses N(6)-[(R)-S(8)-aminomethyldihydrolipoyl]-L-lysyl-[protein] + (6S)-5,6,7,8-tetrahydrofolate = N(6)-[(R)-dihydrolipoyl]-L-lysyl-[protein] + (6R)-5,10-methylene-5,6,7,8-tetrahydrofolate + NH4(+). The glycine cleavage system catalyzes the degradation of glycine. This Ralstonia nicotianae (strain ATCC BAA-1114 / GMI1000) (Ralstonia solanacearum) protein is Aminomethyltransferase.